Here is a 541-residue protein sequence, read N- to C-terminus: Putative apolipoprotein N-acyltransferase (541 aa).

6 helical membrane-spanning segments follow: residues 31–51, 65–85, 89–109, 144–164, 181–201, and 215–235; these read PLPA…AAHA, GWLF…VSMH, GLAA…LALF, AACW…FPWL, LLGV…LAGL, and LAAG…QFSW. The CN hydrolase domain occupies 248-511; sequence VQGNVEQSQK…AGVLPVAVQG (264 aa). The active-site Proton acceptor is glutamate 292. The active site involves lysine 366. The Nucleophile role is filled by cysteine 416.

The protein belongs to the CN hydrolase family. Apolipoprotein N-acyltransferase subfamily.

The protein resides in the cell inner membrane. The catalysed reaction is N-terminal S-1,2-diacyl-sn-glyceryl-L-cysteinyl-[lipoprotein] + a glycerophospholipid = N-acyl-S-1,2-diacyl-sn-glyceryl-L-cysteinyl-[lipoprotein] + a 2-acyl-sn-glycero-3-phospholipid + H(+). It functions in the pathway protein modification; lipoprotein biosynthesis (N-acyl transfer). Functionally, catalyzes the phospholipid dependent N-acylation of the N-terminal cysteine of apolipoprotein, the last step in lipoprotein maturation. The polypeptide is Putative apolipoprotein N-acyltransferase (Bordetella parapertussis (strain 12822 / ATCC BAA-587 / NCTC 13253)).